The following is a 179-amino-acid chain: Translation initiation factor IF-3 (179 aa).

It belongs to the IF-3 family. In terms of assembly, monomer.

Its subcellular location is the cytoplasm. Its function is as follows. IF-3 binds to the 30S ribosomal subunit and shifts the equilibrium between 70S ribosomes and their 50S and 30S subunits in favor of the free subunits, thus enhancing the availability of 30S subunits on which protein synthesis initiation begins. The chain is Translation initiation factor IF-3 from Buchnera aphidicola subsp. Schizaphis graminum (strain Sg).